Here is a 1608-residue protein sequence, read N- to C-terminus: Adenylate cyclase type 10 (1608 aa).

2 Guanylate cyclase domains span residues 42–179 (VLMF…RLAQ) and 293–418 (TIVF…ARMM). Aspartate 47 and isoleucine 48 together coordinate Mg(2+). Residue 47-52 (DISGFT) participates in ATP binding. Lysine 95 contributes to the hydrogencarbonate binding site. Residue aspartate 99 coordinates Mg(2+). ATP-binding residues include aspartate 99 and lysine 144. Hydrogencarbonate contacts are provided by valine 167, arginine 176, and methionine 337. Residues valine 406 and 412 to 416 (NIAAR) contribute to the ATP site.

This sequence belongs to the adenylyl cyclase class-4/guanylyl cyclase family. The cofactor is Mg(2+). It depends on Mn(2+) as a cofactor. Cleavage may occur to generate the active 48 kDa form. Detected in testis (at protein level). Preferentially expressed in testis.

It localises to the cell membrane. It is found in the cytoplasm. The protein resides in the cytoskeleton. The protein localises to the perinuclear region. Its subcellular location is the nucleus. It localises to the cell projection. It is found in the cilium. The protein resides in the mitochondrion. It catalyses the reaction ATP = 3',5'-cyclic AMP + diphosphate. Activated by manganese or magnesium ions. In the presence of magnesium ions, the enzyme is activated by bicarbonate. Calcium mildly increases the enzyme activity, also in the presence of magnesium ions. Catalyzes the formation of the signaling molecule cAMP. May function as sensor that mediates responses to changes in cellular bicarbonate and CO(2) levels. Has a critical role in mammalian spermatogenesis by producing the cAMP which regulates cAMP-responsive nuclear factors indispensable for sperm maturation in the epididymis. Induces capacitation, the maturational process that sperm undergo prior to fertilization. Involved in ciliary beat regulation. This Rattus norvegicus (Rat) protein is Adenylate cyclase type 10 (Adcy10).